Reading from the N-terminus, the 119-residue chain is Large ribosomal subunit protein bL17 (119 aa).

The protein belongs to the bacterial ribosomal protein bL17 family. As to quaternary structure, part of the 50S ribosomal subunit. Contacts protein L32.

The sequence is that of Large ribosomal subunit protein bL17 from Ureaplasma parvum serovar 3 (strain ATCC 27815 / 27 / NCTC 11736).